A 475-amino-acid chain; its full sequence is MSPKTETKASVGFKAGVKEYKLTYYTPEYETKDTDILAAFRVTPQPGVPPEEAGAAVAAESSTGTWTTVWTDGLTSLDRYKGRCYHIEPVPGEESQFIAYVAYPLDLFEEGSVTNMFTSIVGNVFGFKALRALRLEDLRIPTAYVKTFQGPPHGIQVERDKLNKYGRPLLGCTIKPKLGLSAKNYGRAVYECLRGGLDFTKDDENVNSQPFMRWRDRFLFCAEAIYKAQAETGEIKGHYLNATAGTCEEMMKRAIFARELGVPIVMHDYLTGGFTANTTLAHYCRDNGLLLHIHRAMHAVIDRQKNHGIHFRVLAKALRMSGGDHIHAGTVVGKLEGERDITLGFVDLLRDDFIEKDRSRGIYFTQDWVSLPGVLPVASGGIHVWHMPALTEIFGDDSVLQFGGGTLGHPWGNAPGAVANRVALEACVQARNEGRDLASQGNEIIREASKWSPELAAACEVWKEIKFEFKAVDTL.

The propeptide occupies 1–2 (MS). P3 carries the post-translational modification N-acetylproline. K14 carries the N6,N6,N6-trimethyllysine modification. Substrate-binding residues include N123 and T173. The active-site Proton acceptor is K175. K177 lines the substrate pocket. Mg(2+) is bound by residues K201, D203, and E204. N6-carboxylysine is present on K201. H294 acts as the Proton acceptor in catalysis. The substrate site is built by R295, H327, and S379.

Belongs to the RuBisCO large chain family. Type I subfamily. As to quaternary structure, heterohexadecamer of 8 large chains and 8 small chains; disulfide-linked. The disulfide link is formed within the large subunit homodimers. The cofactor is Mg(2+). Post-translationally, the disulfide bond which can form in the large chain dimeric partners within the hexadecamer appears to be associated with oxidative stress and protein turnover.

Its subcellular location is the plastid. It is found in the chloroplast. It carries out the reaction 2 (2R)-3-phosphoglycerate + 2 H(+) = D-ribulose 1,5-bisphosphate + CO2 + H2O. The catalysed reaction is D-ribulose 1,5-bisphosphate + O2 = 2-phosphoglycolate + (2R)-3-phosphoglycerate + 2 H(+). Its function is as follows. RuBisCO catalyzes two reactions: the carboxylation of D-ribulose 1,5-bisphosphate, the primary event in carbon dioxide fixation, as well as the oxidative fragmentation of the pentose substrate in the photorespiration process. Both reactions occur simultaneously and in competition at the same active site. This is Ribulose bisphosphate carboxylase large chain from Magnolia acuminata (Cucumber tree).